Here is a 385-residue protein sequence, read N- to C-terminus: Transcription termination factor 2, mitochondrial (385 aa).

The transit peptide at 1–35 (MSWRLLTGYQLCRLRLFRKPQPALKIRPSSVCVTY) directs the protein to the mitochondrion.

The protein belongs to the mTERF family. As to quaternary structure, monomer.

The protein resides in the mitochondrion matrix. It localises to the mitochondrion nucleoid. Its function is as follows. Binds mitochondrial DNA and plays a role in the regulation of transcription of mitochondrial mRNA and rRNA species. The protein is Transcription termination factor 2, mitochondrial (Mterf2) of Rattus norvegicus (Rat).